A 280-amino-acid polypeptide reads, in one-letter code: Undecaprenyl-diphosphatase (280 aa).

A run of 8 helical transmembrane segments spans residues 1 to 21 (MTILQAIVLAIVEGLTEFLPV), 41 to 61 (FVRAFTVMIQFGAILSVLVLY), 87 to 107 (FDLYWKLLIALVPAVILGFLF), 115 to 135 (LGSVWVVAVVLFLGGIFMLFV), 147 to 167 (ITYPKAFVIGLFQCLAIFLPG), 186 to 206 (KAAAEFSFFLAVPTMLGATLL), 226 to 246 (VLLVGNIVAFIVALAAIKFFI), and 260 to 280 (YRILVGGLLIVLMLSGVSLAV).

Belongs to the UppP family.

It is found in the cell inner membrane. It catalyses the reaction di-trans,octa-cis-undecaprenyl diphosphate + H2O = di-trans,octa-cis-undecaprenyl phosphate + phosphate + H(+). Functionally, catalyzes the dephosphorylation of undecaprenyl diphosphate (UPP). Confers resistance to bacitracin. In Porphyromonas gingivalis (strain ATCC BAA-308 / W83), this protein is Undecaprenyl-diphosphatase.